The chain runs to 180 residues: ATP synthase subunit b 2 (180 aa).

The chain crosses the membrane as a helical span at residues 33 to 53 (IFWLLVTLVAIYFLLTRVALP).

Belongs to the ATPase B chain family. In terms of assembly, F-type ATPases have 2 components, F(1) - the catalytic core - and F(0) - the membrane proton channel. F(1) has five subunits: alpha(3), beta(3), gamma(1), delta(1), epsilon(1). F(0) has three main subunits: a(1), b(2) and c(10-14). The alpha and beta chains form an alternating ring which encloses part of the gamma chain. F(1) is attached to F(0) by a central stalk formed by the gamma and epsilon chains, while a peripheral stalk is formed by the delta and b chains.

It is found in the cell inner membrane. Functionally, f(1)F(0) ATP synthase produces ATP from ADP in the presence of a proton or sodium gradient. F-type ATPases consist of two structural domains, F(1) containing the extramembraneous catalytic core and F(0) containing the membrane proton channel, linked together by a central stalk and a peripheral stalk. During catalysis, ATP synthesis in the catalytic domain of F(1) is coupled via a rotary mechanism of the central stalk subunits to proton translocation. Component of the F(0) channel, it forms part of the peripheral stalk, linking F(1) to F(0). The b'-subunit is a diverged and duplicated form of b found in plants and photosynthetic bacteria. The chain is ATP synthase subunit b 2 (atpF2) from Cereibacter sphaeroides (strain ATCC 17025 / ATH 2.4.3) (Rhodobacter sphaeroides).